A 735-amino-acid polypeptide reads, in one-letter code: Stonin-1 (735 aa).

Positions 1-35 (MCSTNPGKWVTFDDDPAVQSSQKSKNFPLENQGVC) are disordered. In terms of domain architecture, SHD spans 275–408 (GWSFMLRIPE…KLPAVSKPKK (134 aa)). In terms of domain architecture, MHD spans 412 to 715 (EQEISLEIVD…ACYNIQVEIE (304 aa)).

It belongs to the Stoned B family. As to expression, ubiquitous.

Its subcellular location is the cytoplasm. The protein localises to the membrane. Functionally, may be involved in the endocytic machinery. This chain is Stonin-1 (STON1), found in Homo sapiens (Human).